We begin with the raw amino-acid sequence, 270 residues long: MGNTSSERAALDRQGGHKTPRRDSSGGSKDGDRPKILMDSPEDADLFHSEEIKAPEKEEFLAWQHDLEVNDKAPAQARPTVFRWTGGGKEVYLSGSFNNWSKLPLTRSHNNFVAILDLPEGEHQYKFFVDGQWTHDPSEPVVTSQLGTVNNVIQVKKTDFEVFDALMVDSQKCSDVSELSSSPPGPYHQEPYISKPEERFKAPPILPPHLLQVILNKDTGISCDPALLPEPNHVMLNHLYALSIKDGVMVLSATHRYKKKYVTTLLYKPI.

Positions 1-44 (MGNTSSERAALDRQGGHKTPRRDSSGGSKDGDRPKILMDSPEDA) are disordered. A lipid anchor (N-myristoyl glycine) is attached at Gly-2. A Phosphothreonine modification is found at Thr-4. 2 positions are modified to phosphoserine: Ser-5 and Ser-6. Residues 9-36 (AALDRQGGHKTPRRDSSGGSKDGDRPKI) are compositionally biased toward basic and acidic residues. Phosphothreonine is present on Thr-19. 2 positions are modified to phosphoserine; by autocatalysis: Ser-24 and Ser-25. Phosphoserine occurs at positions 40, 96, and 101. The glycogen-binding domain stretch occupies residues 68-163 (EVNDKAPAQA…QVKKTDFEVF (96 aa)). At Ser-108 the chain carries Phosphoserine; by autocatalysis. Thr-148 is subject to Phosphothreonine. Residue Ser-182 is modified to Phosphoserine. Lys-201 is subject to N6-succinyllysine.

The protein belongs to the 5'-AMP-activated protein kinase beta subunit family. As to quaternary structure, AMPK is a heterotrimer of an alpha catalytic subunit (PRKAA1 or PRKAA2), a beta (PRKAB1 or PRKAB2) and a gamma non-catalytic subunits (PRKAG1, PRKAG2 or PRKAG3). Interacts with FNIP1 and FNIP2. Post-translationally, phosphorylated when associated with the catalytic subunit (PRKAA1 or PRKAA2). Phosphorylated by ULK1; leading to negatively regulate AMPK activity and suggesting the existence of a regulatory feedback loop between ULK1 and AMPK.

Non-catalytic subunit of AMP-activated protein kinase (AMPK), an energy sensor protein kinase that plays a key role in regulating cellular energy metabolism. In response to reduction of intracellular ATP levels, AMPK activates energy-producing pathways and inhibits energy-consuming processes: inhibits protein, carbohydrate and lipid biosynthesis, as well as cell growth and proliferation. AMPK acts via direct phosphorylation of metabolic enzymes, and by longer-term effects via phosphorylation of transcription regulators. Also acts as a regulator of cellular polarity by remodeling the actin cytoskeleton; probably by indirectly activating myosin. Beta non-catalytic subunit acts as a scaffold on which the AMPK complex assembles, via its C-terminus that bridges alpha (PRKAA1 or PRKAA2) and gamma subunits (PRKAG1, PRKAG2 or PRKAG3). The protein is 5'-AMP-activated protein kinase subunit beta-1 (PRKAB1) of Bos taurus (Bovine).